Reading from the N-terminus, the 386-residue chain is MKNLTIVADSNIASLDEFFNPVALGQNTEQQVQVIRVAGRDINAQLMADVQPDVLLIRSVTSINESLLSDNNSVKFVGSATIGTDHVDQEYLAERNITFANAAGCSKHSVAQYVVTAILTLRPQYWQQSTKPLTVGIIGLGNIGSTLAQYANDLGWKILGYDPLLATSDINNASLEQVLSQSDIVSLHVPLTDKKDTDAQDAVSNSISNNVSDYPTRHLINAETLTLMSPHTMLINSARGPVIDAAALEADIDATERQVVLDVFEHEPQISESLLSKLAIATPHIAGYTLEGKLRGTQIIYDALCEKLAVLPVLSMHQLLPLNTYLWFELKEHPDRLQKFYDIKKDDAALRNKITNGKVKGSDFDQLRRDYHLRREWQAQTISVTI.

Ser59 and Thr81 together coordinate substrate. Asp162 lines the NAD(+) pocket. Residue Arg239 is part of the active site. Asp262 contacts NAD(+). Glu267 is an active-site residue. The Proton donor role is filled by His284. Gly287 serves as a coordination point for NAD(+). Tyr288 provides a ligand contact to substrate.

This sequence belongs to the D-isomer specific 2-hydroxyacid dehydrogenase family. PdxB subfamily. Homodimer.

The protein localises to the cytoplasm. The enzyme catalyses 4-phospho-D-erythronate + NAD(+) = (R)-3-hydroxy-2-oxo-4-phosphooxybutanoate + NADH + H(+). Its pathway is cofactor biosynthesis; pyridoxine 5'-phosphate biosynthesis; pyridoxine 5'-phosphate from D-erythrose 4-phosphate: step 2/5. In terms of biological role, catalyzes the oxidation of erythronate-4-phosphate to 3-hydroxy-2-oxo-4-phosphonooxybutanoate. The protein is Erythronate-4-phosphate dehydrogenase of Psychrobacter cryohalolentis (strain ATCC BAA-1226 / DSM 17306 / VKM B-2378 / K5).